The primary structure comprises 291 residues: MFIIELIKGIILGIVEGLTEFAPVSSTGHMILVDDMWLKSSEFLGSQSAFTFKIVIQLGSVFAAAWVFRERFLEILHIGKHKHVEGDNNQQRRSKPRRLNLLHVLVGMVPAGILGLLFDDFIEEHLFSVPTVMIGLFVGAIYMIIADKYSAKVKNPQTVDQISYFQAFVIGISQAVAMWPGFSRSGSTISTGVLMKLNHKAASDFTFIMAVPIMLAASGLSLLKHYQDIQIADIPFYILGFLAAFTVGLIAIKTFLHLINKIKLIPFAIYRIVLVIFIAILYFGFGIGKGI.

8 helical membrane-spanning segments follow: residues methionine 1–phenylalanine 21, serine 48–phenylalanine 68, leucine 102–isoleucine 122, leucine 126–alanine 146, isoleucine 162–phenylalanine 182, serine 203–leucine 223, isoleucine 231–alanine 251, and phenylalanine 267–isoleucine 287.

This sequence belongs to the UppP family.

Its subcellular location is the cell membrane. It catalyses the reaction di-trans,octa-cis-undecaprenyl diphosphate + H2O = di-trans,octa-cis-undecaprenyl phosphate + phosphate + H(+). Its function is as follows. Catalyzes the dephosphorylation of undecaprenyl diphosphate (UPP). Confers resistance to bacitracin. In Staphylococcus aureus (strain MRSA252), this protein is Undecaprenyl-diphosphatase.